A 396-amino-acid polypeptide reads, in one-letter code: Elongation factor Tu (396 aa).

One can recognise a tr-type G domain in the interval 11–205 (KPHVNIGTIG…VVDEYIPTPE (195 aa)). Residues 20-27 (GHVDHGKT) form a G1 region. 20 to 27 (GHVDHGKT) lines the GTP pocket. Position 27 (T27) interacts with Mg(2+). Residues 61–65 (GITIN) are G2. Residues 82–85 (DAPG) are G3. GTP-binding positions include 82–86 (DAPGH) and 137–140 (NKCD). The G4 stretch occupies residues 137–140 (NKCD). The tract at residues 175-177 (SAL) is G5.

This sequence belongs to the TRAFAC class translation factor GTPase superfamily. Classic translation factor GTPase family. EF-Tu/EF-1A subfamily. Monomer.

The protein localises to the cytoplasm. The catalysed reaction is GTP + H2O = GDP + phosphate + H(+). Its function is as follows. GTP hydrolase that promotes the GTP-dependent binding of aminoacyl-tRNA to the A-site of ribosomes during protein biosynthesis. The protein is Elongation factor Tu of Lactobacillus delbrueckii subsp. bulgaricus (strain ATCC 11842 / DSM 20081 / BCRC 10696 / JCM 1002 / NBRC 13953 / NCIMB 11778 / NCTC 12712 / WDCM 00102 / Lb 14).